The sequence spans 617 residues: Chaperone protein HscA homolog (617 aa).

The segment at 1–23 is disordered; that stretch reads MALLQIAEPGQSSAPHEHKRAAG.

The protein belongs to the heat shock protein 70 family.

Functionally, chaperone involved in the maturation of iron-sulfur cluster-containing proteins. Has a low intrinsic ATPase activity which is markedly stimulated by HscB. The polypeptide is Chaperone protein HscA homolog (Vibrio vulnificus (strain YJ016)).